Here is an 877-residue protein sequence, read N- to C-terminus: DNA repair protein rad16 (877 aa).

Phosphoserine; by CK2 is present on S71. The interval 440 to 490 (SKSIKKPEPSKEREASNTTSRKGVPPSKRRRVRGGNNATSRTTSDNTDAND) is disordered. The span at 444 to 454 (KKPEPSKEREA) shows a compositional bias: basic and acidic residues. A compositionally biased stretch (polar residues) spans 475 to 490 (NNATSRTTSDNTDAND). In terms of domain architecture, ERCC4 spans 652-732 (RVIVDLREFR…IPVLLIEFEQ (81 aa)).

Belongs to the XPF family. In terms of assembly, heterodimer composed of rad16 and swi10.

It is found in the nucleus. Its subcellular location is the cytoplasm. The protein localises to the cytoskeleton. It localises to the microtubule organizing center. The protein resides in the spindle pole body. Its function is as follows. Endonuclease that specifically degrades single-stranded DNA and which is involved in nucleotide excision repair of DNA damaged with UV light, bulky adducts, or cross-linking agents. Required for double strand break-induced interchromosomal gene conversion. The chain is DNA repair protein rad16 (rad16) from Schizosaccharomyces pombe (strain 972 / ATCC 24843) (Fission yeast).